A 329-amino-acid polypeptide reads, in one-letter code: DNA-directed RNA polymerase subunit alpha (329 aa).

Residues 1 to 235 (MQGSVTEFLK…EQLEAFVDLR (235 aa)) form an alpha N-terminal domain (alpha-NTD) region. The interval 249–329 (FDPILLRPVD…NWPPASIADE (81 aa)) is alpha C-terminal domain (alpha-CTD).

Belongs to the RNA polymerase alpha chain family. In terms of assembly, homodimer. The RNAP catalytic core consists of 2 alpha, 1 beta, 1 beta' and 1 omega subunit. When a sigma factor is associated with the core the holoenzyme is formed, which can initiate transcription.

It carries out the reaction RNA(n) + a ribonucleoside 5'-triphosphate = RNA(n+1) + diphosphate. Its function is as follows. DNA-dependent RNA polymerase catalyzes the transcription of DNA into RNA using the four ribonucleoside triphosphates as substrates. This Shigella dysenteriae serotype 1 (strain Sd197) protein is DNA-directed RNA polymerase subunit alpha.